Here is a 581-residue protein sequence, read N- to C-terminus: Sulfate adenylyltransferase (581 aa).

Residues 1–176 (MANAPHGGVL…VQAIQAPTHF (176 aa)) form an N-terminal region. The segment at 177-401 (DYVPLRYTPA…LRESYPPRPQ (225 aa)) is catalytic. Gln-204 contributes to the sulfate binding site. Residues 204 to 207 (QTRN) and 298 to 301 (GRDH) contribute to the ATP site. Residues Thr-205, Arg-206, and Asn-207 contribute to the active site. Arg-206 is a binding site for sulfate. Sulfate is bound at residue Ala-302. Met-340 contacts ATP. Positions 402–581 (QGFTILLTGL…IMILESQNLV (180 aa)) are allosteric regulation domain; adenylyl-sulfate kinase-like. 3'-phosphoadenylyl sulfate is bound by residues 441-444 (EELR), 486-487 (TA), and Arg-526.

In the N-terminal section; belongs to the sulfate adenylyltransferase family. It in the C-terminal section; belongs to the APS kinase family. As to quaternary structure, homohexamer. Dimer of trimers.

It is found in the cytoplasm. It carries out the reaction sulfate + ATP + H(+) = adenosine 5'-phosphosulfate + diphosphate. The protein operates within sulfur metabolism; hydrogen sulfide biosynthesis; sulfite from sulfate: step 1/3. With respect to regulation, allosterically inhibited by 3'-phosphoadenosine 5'-phosphosulfate (PAPS). Functionally, catalyzes the first intracellular reaction of sulfate assimilation, forming adenosine-5'-phosphosulfate (APS) from inorganic sulfate and ATP. Plays an important role in sulfate activation as a component of the biosynthesis pathway of sulfur-containing amino acids. This Cryptococcus neoformans var. grubii serotype A (strain H99 / ATCC 208821 / CBS 10515 / FGSC 9487) (Filobasidiella neoformans var. grubii) protein is Sulfate adenylyltransferase.